We begin with the raw amino-acid sequence, 1003 residues long: Rho-associated protein kinase 1 (1003 aa).

The segment at 1 to 28 is disordered; that stretch reads VAPVVPDLSSDIDTSNFDDLEEDKGEEE. The AGC-kinase C-terminal domain maps to 1-58; that stretch reads VAPVVPDLSSDIDTSNFDDLEEDKGEEETFPIPKAFVGNQLPFVGFTYYSNRRYLSSA. The span at 16-28 shows a compositional bias: acidic residues; sequence NFDDLEEDKGEEE. The interval 17-376 is interaction with FHOD1; sequence FDDLEEDKGE…KKLKEEREAR (360 aa). Positions 71–341 form a coiled coil; that stretch reads KSLQESLQKT…RLEQEVNEHK (271 aa). The 78-residue stretch at 128–205 folds into the REM-1 domain; sequence STVSQIEKEK…LEEANDLLRT (78 aa). Lys296 bears the N6-acetyllysine mark. The interval 356-595 is SHROOM3 binding; it reads EAKSVAMCEM…TVSRLEEANS (240 aa). The RhoBD domain occupies 598–664; the sequence is TKDIEILRRE…LAEIMNRKDF (67 aa). Residues 647–659 are RHOA binding; sequence LKTQAVNKLAEIM. The stretch at 660 to 751 forms a coiled coil; that stretch reads NRKDFKIDRK…KLLDLSDSTS (92 aa). Ser754 and Ser757 each carry phosphoserine. Residues 764–1003 are auto-inhibitory; sequence NLPESRIEGW…VVKNTSGKTR (240 aa). Positions 767–966 constitute a PH domain; the sequence is ESRIEGWLSV…WVTHLVKKIP (200 aa). The Phorbol-ester/DAG-type zinc finger occupies 877–930; the sequence is GHEFIPTLYHFPANCDACAKPLWHVFKPPPALECRRCHVKCHRDHLDKKEDLIC. Residues 968–1003 form a disordered region; that stretch reads NPPSGFVRASPRTLSTRSTANQSFRKVVKNTSGKTR. At Ser977 the chain carries Phosphoserine. A compositionally biased stretch (polar residues) spans 979–1003; sequence RTLSTRSTANQSFRKVVKNTSGKTR.

Belongs to the protein kinase superfamily. AGC Ser/Thr protein kinase family. As to quaternary structure, homodimer. Interacts with RHOA (activated by GTP), RHOB, RHOC, GEM, MYLC2B, RHOE, PPP1R12A, LIMK1, LIMK2, TSG101, CHORDC1, DAPK3, PFN1, PTEN and JIP3. Interacts with ITGB1BP1 (via N-terminus and PTB domain). Interacts with FHOD1 in a Src-dependent manner. Interacts with SHROOM3. Mg(2+) is required as a cofactor. Autophosphorylated on serine and threonine residues. Post-translationally, cleaved by caspase-3 during apoptosis. This leads to constitutive activation of the kinase and membrane blebbing.

The protein localises to the cytoplasm. It localises to the cytoskeleton. Its subcellular location is the microtubule organizing center. The protein resides in the centrosome. It is found in the centriole. The protein localises to the golgi apparatus membrane. It localises to the cell projection. Its subcellular location is the bleb. The protein resides in the cell membrane. It is found in the lamellipodium. The protein localises to the ruffle. It carries out the reaction L-seryl-[protein] + ATP = O-phospho-L-seryl-[protein] + ADP + H(+). It catalyses the reaction L-threonyl-[protein] + ATP = O-phospho-L-threonyl-[protein] + ADP + H(+). Its activity is regulated as follows. Activated by RHOA binding. Inhibited by Y-27632. Its function is as follows. Protein kinase which is a key regulator of actin cytoskeleton and cell polarity. Involved in regulation of smooth muscle contraction, actin cytoskeleton organization, stress fiber and focal adhesion formation, neurite retraction, cell adhesion and motility via phosphorylation of DAPK3, GFAP, LIMK1, LIMK2, MYL9/MLC2, TPPP, PFN1 and PPP1R12A. Phosphorylates FHOD1 and acts synergistically with it to promote SRC-dependent non-apoptotic plasma membrane blebbing. Phosphorylates JIP3 and regulates the recruitment of JNK to JIP3 upon UVB-induced stress. Acts as a suppressor of inflammatory cell migration by regulating PTEN phosphorylation and stability. Acts as a negative regulator of VEGF-induced angiogenic endothelial cell activation. Required for centrosome positioning and centrosome-dependent exit from mitosis. Plays a role in terminal erythroid differentiation. May regulate closure of the eyelids and ventral body wall by inducing the assembly of actomyosin bundles. Promotes keratinocyte terminal differentiation. Involved in osteoblast compaction through the fibronectin fibrillogenesis cell-mediated matrix assembly process, essential for osteoblast mineralization. This Pan troglodytes (Chimpanzee) protein is Rho-associated protein kinase 1 (ROCK1).